The chain runs to 82 residues: Small ribosomal subunit protein bS18 (82 aa).

A disordered region spans residues 1–25 (MKRNNMKRARMEQSRRPKKNPLKAE).

This sequence belongs to the bacterial ribosomal protein bS18 family. As to quaternary structure, part of the 30S ribosomal subunit. Forms a tight heterodimer with protein bS6.

Functionally, binds as a heterodimer with protein bS6 to the central domain of the 16S rRNA, where it helps stabilize the platform of the 30S subunit. In Corynebacterium urealyticum (strain ATCC 43042 / DSM 7109), this protein is Small ribosomal subunit protein bS18.